The chain runs to 94 residues: Co-chaperonin GroES (94 aa).

It belongs to the GroES chaperonin family. Heptamer of 7 subunits arranged in a ring. Interacts with the chaperonin GroEL.

The protein localises to the cytoplasm. In terms of biological role, together with the chaperonin GroEL, plays an essential role in assisting protein folding. The GroEL-GroES system forms a nano-cage that allows encapsulation of the non-native substrate proteins and provides a physical environment optimized to promote and accelerate protein folding. GroES binds to the apical surface of the GroEL ring, thereby capping the opening of the GroEL channel. The polypeptide is Co-chaperonin GroES (Lactococcus lactis subsp. lactis (strain IL1403) (Streptococcus lactis)).